The chain runs to 288 residues: Mycothiol S-conjugate amidase (288 aa).

Zn(2+)-binding residues include His-12, Asp-15, and His-142.

It belongs to the MshB deacetylase family. Mca subfamily. As to quaternary structure, monomer. It depends on Zn(2+) as a cofactor.

It carries out the reaction mycothiol S-conjugate + H2O = an N-acetyl-L-cysteine-S-conjugate + 1D-myo-inositol 2-amino-2-deoxy-alpha-D-glucopyranoside. Its activity is regulated as follows. Partially inhibited by MSH when MSmB is used as substrate. Competitively inhibited by the GlcNAc-cyclohexyl derivative 5-(4-chlorophenyl)-N-((2R,3R,4R,5S,6R)-2-(cyclohexylthio)-tetrahydro-4,5-dihydroxy-6-(hydroxymethyl)-2H-pyran-3-yl)furan-2-carboxamide, which also inhibits MshB. Functionally, a mycothiol (MSH, N-acetyl-cysteinyl-glucosaminyl-inositol) S-conjugate amidase, it recycles conjugated MSH to the N-acetyl cysteine conjugate and the MSH precursor. Involved in MSH-dependent detoxification of a number of alkylating agents and antibiotics. Activity is specific for the mycothiol moiety. Has a low but measurable deacetylation activity on GlcNAc-Ins (N-acetyl-glucosaminyl-inositol), and thus can also directly contribute to the production of MSH. In Mycobacterium tuberculosis (strain ATCC 25618 / H37Rv), this protein is Mycothiol S-conjugate amidase.